Reading from the N-terminus, the 155-residue chain is Small ribosomal subunit protein uS7c (155 aa).

The protein belongs to the universal ribosomal protein uS7 family. Part of the 30S ribosomal subunit.

It is found in the plastid. It localises to the chloroplast. Functionally, one of the primary rRNA binding proteins, it binds directly to 16S rRNA where it nucleates assembly of the head domain of the 30S subunit. The protein is Small ribosomal subunit protein uS7c (rps7) of Cedrus deodara (Deodar cedar).